The chain runs to 621 residues: Pre-mRNA-processing protein 45 (621 aa).

Disordered stretches follow at residues 1-73 (MSAT…YANG), 137-164 (SQRT…SNTE), 220-251 (AQRD…RSPP), 347-438 (RARE…ELRM), and 542-621 (GKND…EHDS). Over residues 36-51 (PSTSSSSSALVSTSSP) the composition is skewed to low complexity. 2 stretches are compositionally biased toward basic and acidic residues: residues 140-164 (TDIK…SNTE) and 220-229 (AQRDPLEPPR). Positions 239 to 248 (PPSPPPPVLR) are enriched in pro residues. Basic and acidic residues predominate over residues 364-380 (GRDDDVASRLADSDARP). The segment covering 403-417 (DSDESAASDEEDDEG) has biased composition (acidic residues). 2 stretches are compositionally biased toward basic and acidic residues: residues 418–437 (ARER…RELR) and 594–621 (EDAK…EHDS).

The protein belongs to the SNW family. Associated with the spliceosome.

The protein localises to the nucleus. Involved in pre-mRNA splicing. The sequence is that of Pre-mRNA-processing protein 45 (PRP45) from Mycosarcoma maydis (Corn smut fungus).